The following is a 204-amino-acid chain: Late expression factor 2 (204 aa).

This sequence belongs to the baculoviridae LEF-2 family.

Its function is as follows. Required for late and very late gene expression. Specifically required for expression from the vp39 and polh promoters. This chain is Late expression factor 2 (LEF-2), found in Orgyia pseudotsugata (Douglas-fir tussock moth).